Here is a 404-residue protein sequence, read N- to C-terminus: Argininosuccinate synthase (404 aa).

ATP-binding positions include 10–18 and Ala38; that span reads AYSGGVDTS. Position 89 (Tyr89) interacts with L-citrulline. Position 119 (Gly119) interacts with ATP. L-aspartate is bound by residues Thr121, Asn125, and Asp126. Asn125 contacts L-citrulline. L-citrulline is bound by residues Arg129, Ser177, Ser186, Glu262, and Tyr274.

This sequence belongs to the argininosuccinate synthase family. Type 1 subfamily. As to quaternary structure, homotetramer.

The protein localises to the cytoplasm. The catalysed reaction is L-citrulline + L-aspartate + ATP = 2-(N(omega)-L-arginino)succinate + AMP + diphosphate + H(+). It functions in the pathway amino-acid biosynthesis; L-arginine biosynthesis; L-arginine from L-ornithine and carbamoyl phosphate: step 2/3. This chain is Argininosuccinate synthase, found in Prochlorococcus marinus (strain AS9601).